Here is an 843-residue protein sequence, read N- to C-terminus: Protein P (843 aa).

The terminal protein domain (TP) stretch occupies residues 1–177 (MPLSYPHFRK…FCGSPYSWEQ (177 aa)). The spacer stretch occupies residues 178 to 346 (ELQHGSTSLN…YCLSHIINLL (169 aa)). The tract at residues 284 to 308 (EANPSLSTSKRHTSTGNAVELNPVP) is disordered. Residues 347–690 (EDWGPCYEHG…YMNLYPVARQ (344 aa)) form a polymerase/reverse transcriptase domain (RT) region. In terms of domain architecture, Reverse transcriptase spans 357–600 (QHHIRTPRTP…YNLHFMGYVI (244 aa)). Mg(2+) contacts are provided by Asp429, Asp551, and Asp552.

Belongs to the hepadnaviridae P protein family.

It catalyses the reaction DNA(n) + a 2'-deoxyribonucleoside 5'-triphosphate = DNA(n+1) + diphosphate. The enzyme catalyses Endonucleolytic cleavage to 5'-phosphomonoester.. Its activity is regulated as follows. Activated by host HSP70 and HSP40 in vitro to be able to bind the epsilon loop of the pgRNA. Because deletion of the RNase H region renders the protein partly chaperone-independent, the chaperones may be needed indirectly to relieve occlusion of the RNA-binding site by this domain. Inhibited by several reverse-transcriptase inhibitors: Lamivudine, Adefovir and Entecavir. Multifunctional enzyme that converts the viral RNA genome into dsDNA in viral cytoplasmic capsids. This enzyme displays a DNA polymerase activity that can copy either DNA or RNA templates, and a ribonuclease H (RNase H) activity that cleaves the RNA strand of RNA-DNA heteroduplexes in a partially processive 3'- to 5'-endonucleasic mode. Neo-synthesized pregenomic RNA (pgRNA) are encapsidated together with the P protein, and reverse-transcribed inside the nucleocapsid. Initiation of reverse-transcription occurs first by binding the epsilon loop on the pgRNA genome, and is initiated by protein priming, thereby the 5'-end of (-)DNA is covalently linked to P protein. Partial (+)DNA is synthesized from the (-)DNA template and generates the relaxed circular DNA (RC-DNA) genome. After budding and infection, the RC-DNA migrates in the nucleus, and is converted into a plasmid-like covalently closed circular DNA (cccDNA). The activity of P protein does not seem to be necessary for cccDNA generation, and is presumably released from (+)DNA by host nuclear DNA repair machinery. This chain is Protein P, found in Homo sapiens (Human).